Reading from the N-terminus, the 289-residue chain is Probable endonuclease 4 (289 aa).

Residues His74, His115, Glu150, Asp184, His187, His218, Asp231, His233, and Glu263 each coordinate Zn(2+).

This sequence belongs to the AP endonuclease 2 family. The cofactor is Zn(2+).

It catalyses the reaction Endonucleolytic cleavage to 5'-phosphooligonucleotide end-products.. Endonuclease IV plays a role in DNA repair. It cleaves phosphodiester bonds at apurinic or apyrimidinic (AP) sites, generating a 3'-hydroxyl group and a 5'-terminal sugar phosphate. The polypeptide is Probable endonuclease 4 (Mycoplasma capricolum subsp. capricolum (strain California kid / ATCC 27343 / NCTC 10154)).